The following is a 635-amino-acid chain: Replication factor C small subunit (635 aa).

51–58 (GPPGTGKT) provides a ligand contact to ATP.

Belongs to the activator 1 small subunits family. RfcS subfamily. As to quaternary structure, heteromultimer composed of small subunits (RfcS) and large subunits (RfcL). Post-translationally, this protein undergoes a protein self splicing that involves a post-translational excision of the intervening region (intein) followed by peptide ligation.

Its function is as follows. Part of the RFC clamp loader complex which loads the PCNA sliding clamp onto DNA. In Methanopyrus kandleri (strain AV19 / DSM 6324 / JCM 9639 / NBRC 100938), this protein is Replication factor C small subunit (rfcS).